A 231-amino-acid chain; its full sequence is Acyl-protein thioesterase 1 (231 aa).

Catalysis depends on charge relay system residues Ser121, Asp178, and His211.

It belongs to the AB hydrolase superfamily. AB hydrolase 2 family.

It is found in the cytoplasm. The protein resides in the nucleus. It catalyses the reaction S-hexadecanoyl-L-cysteinyl-[protein] + H2O = L-cysteinyl-[protein] + hexadecanoate + H(+). Hydrolyzes fatty acids from S-acylated cysteine residues in proteins with a strong preference for palmitoylated G-alpha proteins over other acyl substrates. Mediates the deacylation of G-alpha proteins such as GPA1 in vivo, but has weak or no activity toward palmitoylated Ras proteins. Has weak lysophospholipase activity in vitro; however such activity may not exist in vivo. This Candida albicans (strain SC5314 / ATCC MYA-2876) (Yeast) protein is Acyl-protein thioesterase 1.